Consider the following 85-residue polypeptide: Large ribosomal subunit protein bL27 (85 aa).

This sequence belongs to the bacterial ribosomal protein bL27 family.

In Xylella fastidiosa (strain 9a5c), this protein is Large ribosomal subunit protein bL27.